The sequence spans 404 residues: Transcription factor sem-2 (404 aa).

Residues 93 to 161 constitute a DNA-binding region (HMG box); that stretch reads IKRPMNAFMV…CHMQEYPDYK (69 aa). Disordered regions lie at residues 158–218 and 321–359; these read PDYK…QFQN and HTSP…NSAG. The segment covering 177 to 199 has biased composition (low complexity); the sequence is QQPAQPQAPQQQQAPPRGASPQA. Polar residues-rich tracts occupy residues 207 to 218 and 347 to 359; these read TDQQSETQQFQN and ASEQ…NSAG.

Its subcellular location is the nucleus. Probable transcription factor required for embryogenesis, vulval development and cell fate specification of the postembryonic mesoderm (also known as the M lineage). Specifically, required for the specification of sex myoblast cells and their development into the muscles that are necessary for egg-laying. In addition, may be involved in RME GABAergic motor neuron progenitor cell fate specification. This Caenorhabditis elegans protein is Transcription factor sem-2.